A 124-amino-acid chain; its full sequence is Large ribosomal subunit protein bL12 (124 aa).

Positions glycine 93–lysine 124 are disordered. Positions glycine 101–glutamate 116 are enriched in basic and acidic residues.

It belongs to the bacterial ribosomal protein bL12 family. As to quaternary structure, homodimer. Part of the ribosomal stalk of the 50S ribosomal subunit. Forms a multimeric L10(L12)X complex, where L10 forms an elongated spine to which 2 to 4 L12 dimers bind in a sequential fashion. Binds GTP-bound translation factors.

In terms of biological role, forms part of the ribosomal stalk which helps the ribosome interact with GTP-bound translation factors. Is thus essential for accurate translation. The polypeptide is Large ribosomal subunit protein bL12 (Marinobacter nauticus (strain ATCC 700491 / DSM 11845 / VT8) (Marinobacter aquaeolei)).